An 88-amino-acid chain; its full sequence is Transcription factor ILI5 (88 aa).

Residues Met-1–Leu-54 form the bHLH domain.

This sequence belongs to the bHLH protein family. As to quaternary structure, interacts with APG.

It is found in the nucleus. Atypical and probable non DNA-binding bHLH transcription factor that acts as a positive regulator of grain size. Binds the transcription repressor APG and forms a heterodimer of antagonistic basic helix-loop-helix transcription factors that regulates grain length and weight by controlling cell elongation in lemma and palea. In Oryza sativa subsp. indica (Rice), this protein is Transcription factor ILI5 (ILI5).